Reading from the N-terminus, the 76-residue chain is UPF0248 protein MmarC6_0667 (76 aa).

The protein belongs to the UPF0248 family.

This is UPF0248 protein MmarC6_0667 from Methanococcus maripaludis (strain C6 / ATCC BAA-1332).